Reading from the N-terminus, the 196-residue chain is Large ribosomal subunit protein bL9 (196 aa).

The disordered stretch occupies residues 172–196 (NESARPEAFFDPEAEIEQEEGEENA). Residues 181–196 (FDPEAEIEQEEGEENA) show a composition bias toward acidic residues.

Belongs to the bacterial ribosomal protein bL9 family.

Binds to the 23S rRNA. This Chelativorans sp. (strain BNC1) protein is Large ribosomal subunit protein bL9.